A 931-amino-acid polypeptide reads, in one-letter code: GPI ethanolamine phosphate transferase 1 (931 aa).

A topological domain (cytoplasmic) is located at residue Met-1. The chain crosses the membrane as a helical span at residues 2–24 (LLFFTLGLLIHFVFFASIFDIYF). The Lumenal portion of the chain corresponds to 25-442 (TSPLVHGMTP…SYYHTYDRFF (418 aa)). Asn-128, Asn-192, and Asn-350 each carry an N-linked (GlcNAc...) asparagine glycan. The helical transmembrane segment at 443-463 (LGVNVVIGFVGWISYASLLII) threads the bilayer. Residues 464–482 (KSHSNLIKGVSKEVKKPSH) lie on the Cytoplasmic side of the membrane. A helical membrane pass occupies residues 483-503 (LLPCSFVAIGILVAFFLLIQA). Residues 504-508 (CPWTY) are Lumenal-facing. Residues 509 to 529 (YVYGLLPLPIWYAVLREFQVI) traverse the membrane as a helical segment. At 530-543 (QDLVVSVLTYPLSH) the chain is on the cytoplasmic side. The chain crosses the membrane as a helical span at residues 544-564 (FVGYLLAFTLGIEVLVLSFFY). Arg-565 is a topological domain (lumenal). A helical transmembrane segment spans residues 566 to 586 (YMLTAGLTAFAAWPFLTRLWT). The Cytoplasmic segment spans residues 587 to 591 (RAKMT). Residues 592–612 (SLSWTFFSLLLAVFPLMPVVG) form a helical membrane-spanning segment. Over 613–618 (RKPDIS) the chain is Lumenal. The chain crosses the membrane as a helical span at residues 619–639 (LVMGAGLLVLLLSLCVVTSLM). At 640–649 (KRKDSFIKEE) the chain is on the cytoplasmic side. A helical transmembrane segment spans residues 650–670 (LLVHLLQVLSTVLSMYVVYST). Residues 671–685 (QSSLLRKQGLPLMNQ) are Lumenal-facing. The chain crosses the membrane as a helical span at residues 686 to 706 (IISWATLASSLVVPLLSSPVL). Residues 707 to 723 (FQRLFSILLSLMSTYLL) are Cytoplasmic-facing. The helical transmembrane segment at 724 to 744 (LSTGYEALFPLVLSCLMFVWI) threads the bilayer. At 745 to 786 (NIEQETLQQSGVCCKQKLTSIQFSYNTDITQFRQLYLDDIRR) the chain is on the lumenal side. Residues 787 to 807 (AFFLVFFLVTAFFGTGNIASI) form a helical membrane-spanning segment. Residues 808 to 824 (NSFDLASVYCFLTVFSP) lie on the Cytoplasmic side of the membrane. The helical transmembrane segment at 825–845 (FMMGALMMWKILIPFVLVMCA) threads the bilayer. Residues 846–858 (FEAVQLTTQLSSK) lie on the Lumenal side of the membrane. Residues 859–879 (SLFLIVLVISDIMALHFFFLV) form a helical membrane-spanning segment. At 880–894 (KDYGSWLDIGTSISH) the chain is on the cytoplasmic side. A helical transmembrane segment spans residues 895 to 915 (YVIVMSMTIFLVFLNGLAQLL). The Lumenal segment spans residues 916 to 931 (TTKKLRLCGKPKSHFM).

The protein belongs to the PIGG/PIGN/PIGO family. PIGN subfamily.

The protein resides in the endoplasmic reticulum membrane. It participates in glycolipid biosynthesis; glycosylphosphatidylinositol-anchor biosynthesis. Ethanolamine phosphate transferase that catalyzes an ethanolamine phosphate (EtNP) transfer from phosphatidylethanolamine (PE) to the 2-OH position of the first alpha-1,4-linked mannose of the alpha-D-Man-(1-&gt;6)-alpha-D-Man-(1-&gt;4)-alpha-D-GlcN-(1-&gt;6)-(1-radyl,2-acyl-sn-glycero-3-phospho)-2-acyl-inositol (also termed H3) intermediate to generate an alpha-D-Man-(1-&gt;6)-2-PEtn-alpha-D-Man-(1-&gt;4)-alpha-D-GlcN-(1-&gt;6)-(1-radyl,2-acyl-sn-glycero-3-phospho)-2-acyl-inositol and participates in the eighth step of the glycosylphosphatidylinositol-anchor biosynthesis. May act as suppressor of replication stress and chromosome missegregation. The chain is GPI ethanolamine phosphate transferase 1 from Homo sapiens (Human).